The primary structure comprises 226 residues: ATP-dependent dethiobiotin synthetase BioD (226 aa).

13–18 serves as a coordination point for ATP; it reads DVGKTV. Residue Thr-17 coordinates Mg(2+). Residue Lys-38 is part of the active site. ATP is bound by residues Asp-55, 116–119, and 176–177; these read EGAG and NR. Mg(2+)-binding residues include Asp-55 and Glu-116.

Belongs to the dethiobiotin synthetase family. As to quaternary structure, homodimer. Mg(2+) serves as cofactor.

The protein resides in the cytoplasm. The catalysed reaction is (7R,8S)-7,8-diammoniononanoate + CO2 + ATP = (4R,5S)-dethiobiotin + ADP + phosphate + 3 H(+). Its pathway is cofactor biosynthesis; biotin biosynthesis; biotin from 7,8-diaminononanoate: step 1/2. Its function is as follows. Catalyzes a mechanistically unusual reaction, the ATP-dependent insertion of CO2 between the N7 and N8 nitrogen atoms of 7,8-diaminopelargonic acid (DAPA, also called 7,8-diammoniononanoate) to form a ureido ring. This chain is ATP-dependent dethiobiotin synthetase BioD, found in Aliivibrio fischeri (strain MJ11) (Vibrio fischeri).